A 228-amino-acid chain; its full sequence is ATP phosphoribosyltransferase (228 aa).

This sequence belongs to the ATP phosphoribosyltransferase family. Short subfamily. As to quaternary structure, heteromultimer composed of HisG and HisZ subunits.

Its subcellular location is the cytoplasm. It catalyses the reaction 1-(5-phospho-beta-D-ribosyl)-ATP + diphosphate = 5-phospho-alpha-D-ribose 1-diphosphate + ATP. It functions in the pathway amino-acid biosynthesis; L-histidine biosynthesis; L-histidine from 5-phospho-alpha-D-ribose 1-diphosphate: step 1/9. Catalyzes the condensation of ATP and 5-phosphoribose 1-diphosphate to form N'-(5'-phosphoribosyl)-ATP (PR-ATP). Has a crucial role in the pathway because the rate of histidine biosynthesis seems to be controlled primarily by regulation of HisG enzymatic activity. This is ATP phosphoribosyltransferase from Acinetobacter baylyi (strain ATCC 33305 / BD413 / ADP1).